The following is a 210-amino-acid chain: Ribosomal RNA large subunit methyltransferase E (210 aa).

5 residues coordinate S-adenosyl-L-methionine: glycine 61, tryptophan 63, aspartate 81, aspartate 97, and aspartate 122. The active-site Proton acceptor is the lysine 162.

This sequence belongs to the class I-like SAM-binding methyltransferase superfamily. RNA methyltransferase RlmE family.

It is found in the cytoplasm. It carries out the reaction uridine(2552) in 23S rRNA + S-adenosyl-L-methionine = 2'-O-methyluridine(2552) in 23S rRNA + S-adenosyl-L-homocysteine + H(+). Its function is as follows. Specifically methylates the uridine in position 2552 of 23S rRNA at the 2'-O position of the ribose in the fully assembled 50S ribosomal subunit. The sequence is that of Ribosomal RNA large subunit methyltransferase E from Xanthomonas campestris pv. campestris (strain 8004).